A 261-amino-acid chain; its full sequence is 5-hmdU DNA kinase (261 aa).

Belongs to the thymidylate kinase family. 5-hmdU DNA kinase subfamily.

It catalyses the reaction 5-hydroxymethyl-dUMP in DNA + ATP = 5-phosphomethyl-dUMP in DNA + ADP + H(+). Its function is as follows. Phosphorylates 5-hydroxymethyluracil (5hmdU) into 5-phosphomethyl-2'-deoxyuridine (5- PmdU) on DNA as a step in the pathway leading to thymidine hypermodifications in the viral genome. As a final result of the pathway of hypermodification, 5-Nalpha-putrescinylthymidine (Nalpha-PutT) substitutes for about 50% of thymidines in the viral DNA. These modifications probably prevent degradation of viral genome by the host restriction-modification antiviral defense system. The protein is 5-hmdU DNA kinase of Delftia phage PhiW-14 (Deftia acidovorans bacteriophage phiW-14).